Reading from the N-terminus, the 214-residue chain is Ribosomal RNA large subunit methyltransferase E (214 aa).

S-adenosyl-L-methionine contacts are provided by Gly60, Trp62, Asp86, Asp102, and Asp127. The active-site Proton acceptor is the Lys167.

The protein belongs to the class I-like SAM-binding methyltransferase superfamily. RNA methyltransferase RlmE family.

The protein resides in the cytoplasm. The catalysed reaction is uridine(2552) in 23S rRNA + S-adenosyl-L-methionine = 2'-O-methyluridine(2552) in 23S rRNA + S-adenosyl-L-homocysteine + H(+). Specifically methylates the uridine in position 2552 of 23S rRNA at the 2'-O position of the ribose in the fully assembled 50S ribosomal subunit. The polypeptide is Ribosomal RNA large subunit methyltransferase E (Janthinobacterium sp. (strain Marseille) (Minibacterium massiliensis)).